The following is a 283-amino-acid chain: 4-diphosphocytidyl-2-C-methyl-D-erythritol kinase (283 aa).

Lys9 is a catalytic residue. 93-103 (PIAAGLAGGSS) lines the ATP pocket. The active site involves Asp135.

The protein belongs to the GHMP kinase family. IspE subfamily.

The catalysed reaction is 4-CDP-2-C-methyl-D-erythritol + ATP = 4-CDP-2-C-methyl-D-erythritol 2-phosphate + ADP + H(+). Its pathway is isoprenoid biosynthesis; isopentenyl diphosphate biosynthesis via DXP pathway; isopentenyl diphosphate from 1-deoxy-D-xylulose 5-phosphate: step 3/6. Functionally, catalyzes the phosphorylation of the position 2 hydroxy group of 4-diphosphocytidyl-2C-methyl-D-erythritol. This chain is 4-diphosphocytidyl-2-C-methyl-D-erythritol kinase, found in Macrococcus caseolyticus (strain JCSC5402) (Macrococcoides caseolyticum).